Consider the following 215-residue polypeptide: Adenylate kinase (215 aa).

Residue 10–15 (GAGKGT) participates in ATP binding. The NMP stretch occupies residues 30–59 (STGDMLRAAVKAGTELGLKAKSVMDSGGLV). AMP contacts are provided by residues T31, R36, 57–59 (GLV), 85–88 (GFPR), and Q92. Positions 122 to 159 (GRRVHEASGRVYHTVYNPPKIAGKDDITGEDLVQRKDD) are LID. Residues R123 and 132 to 133 (VY) each bind ATP. R156 and R167 together coordinate AMP. G201 lines the ATP pocket.

Belongs to the adenylate kinase family. Monomer.

It is found in the cytoplasm. The catalysed reaction is AMP + ATP = 2 ADP. Its pathway is purine metabolism; AMP biosynthesis via salvage pathway; AMP from ADP: step 1/1. In terms of biological role, catalyzes the reversible transfer of the terminal phosphate group between ATP and AMP. Plays an important role in cellular energy homeostasis and in adenine nucleotide metabolism. In Pseudomonas fluorescens (strain ATCC BAA-477 / NRRL B-23932 / Pf-5), this protein is Adenylate kinase.